The primary structure comprises 159 residues: 2-C-methyl-D-erythritol 2,4-cyclodiphosphate synthase (159 aa).

2 residues coordinate a divalent metal cation: Asp-8 and His-10. 4-CDP-2-C-methyl-D-erythritol 2-phosphate contacts are provided by residues 8–10 and 34–35; these read DVH and HS. Residue His-42 participates in a divalent metal cation binding. Residues 56–58, 61–65, 100–106, 132–135, Phe-139, and Arg-142 each bind 4-CDP-2-C-methyl-D-erythritol 2-phosphate; these read DIG, FPDTD, AQAPKML, and TTTE.

It belongs to the IspF family. As to quaternary structure, homotrimer. A divalent metal cation serves as cofactor.

It catalyses the reaction 4-CDP-2-C-methyl-D-erythritol 2-phosphate = 2-C-methyl-D-erythritol 2,4-cyclic diphosphate + CMP. It participates in isoprenoid biosynthesis; isopentenyl diphosphate biosynthesis via DXP pathway; isopentenyl diphosphate from 1-deoxy-D-xylulose 5-phosphate: step 4/6. In terms of biological role, involved in the biosynthesis of isopentenyl diphosphate (IPP) and dimethylallyl diphosphate (DMAPP), two major building blocks of isoprenoid compounds. Catalyzes the conversion of 4-diphosphocytidyl-2-C-methyl-D-erythritol 2-phosphate (CDP-ME2P) to 2-C-methyl-D-erythritol 2,4-cyclodiphosphate (ME-CPP) with a corresponding release of cytidine 5-monophosphate (CMP). In Escherichia coli O139:H28 (strain E24377A / ETEC), this protein is 2-C-methyl-D-erythritol 2,4-cyclodiphosphate synthase.